A 126-amino-acid polypeptide reads, in one-letter code: Large ribosomal subunit protein bL12 (126 aa).

Belongs to the bacterial ribosomal protein bL12 family. As to quaternary structure, homodimer. Part of the ribosomal stalk of the 50S ribosomal subunit. Forms a multimeric L10(L12)X complex, where L10 forms an elongated spine to which 2 to 4 L12 dimers bind in a sequential fashion. Binds GTP-bound translation factors.

Its function is as follows. Forms part of the ribosomal stalk which helps the ribosome interact with GTP-bound translation factors. Is thus essential for accurate translation. In Acidobacterium capsulatum (strain ATCC 51196 / DSM 11244 / BCRC 80197 / JCM 7670 / NBRC 15755 / NCIMB 13165 / 161), this protein is Large ribosomal subunit protein bL12.